We begin with the raw amino-acid sequence, 465 residues long: GTPase Der (465 aa).

2 consecutive EngA-type G domains span residues 3-167 (PLVA…PEEG) and 179-352 (VRIA…ASAT). GTP-binding positions include 9-16 (GRPNVGKS), 57-61 (DTGGI), 119-122 (NKID), 185-192 (GRPNVGKS), 232-236 (DTAGL), and 297-300 (NKWD). A KH-like domain is found at 353 to 437 (HEFSTSEVNQ…PVRFIFREGA (85 aa)).

Belongs to the TRAFAC class TrmE-Era-EngA-EngB-Septin-like GTPase superfamily. EngA (Der) GTPase family. As to quaternary structure, associates with the 50S ribosomal subunit.

GTPase that plays an essential role in the late steps of ribosome biogenesis. This Xanthomonas campestris pv. campestris (strain 8004) protein is GTPase Der.